The primary structure comprises 360 residues: Aminomethyltransferase (360 aa).

Belongs to the GcvT family. In terms of assembly, the glycine cleavage system is composed of four proteins: P, T, L and H.

It catalyses the reaction N(6)-[(R)-S(8)-aminomethyldihydrolipoyl]-L-lysyl-[protein] + (6S)-5,6,7,8-tetrahydrofolate = N(6)-[(R)-dihydrolipoyl]-L-lysyl-[protein] + (6R)-5,10-methylene-5,6,7,8-tetrahydrofolate + NH4(+). Its function is as follows. The glycine cleavage system catalyzes the degradation of glycine. The polypeptide is Aminomethyltransferase (Exiguobacterium sibiricum (strain DSM 17290 / CCUG 55495 / CIP 109462 / JCM 13490 / 255-15)).